Consider the following 284-residue polypeptide: 4-hydroxybenzoate octaprenyltransferase (284 aa).

The next 9 membrane-spanning stretches (helical) occupy residues 19-39 (IPIL…SHGL), 42-62 (ISYL…GCII), 85-105 (GQLS…VAFI), 107-127 (VLFL…LAIL), 134-154 (FFAI…FMAF), 165-185 (AWIF…IYAL), 211-231 (ILLF…YCDF), 233-253 (SFFY…YFLY), and 261-281 (CINA…MAVI).

The protein belongs to the UbiA prenyltransferase family. It depends on Mg(2+) as a cofactor.

Its subcellular location is the cell inner membrane. It carries out the reaction all-trans-octaprenyl diphosphate + 4-hydroxybenzoate = 4-hydroxy-3-(all-trans-octaprenyl)benzoate + diphosphate. Its pathway is cofactor biosynthesis; ubiquinone biosynthesis. In terms of biological role, catalyzes the prenylation of para-hydroxybenzoate (PHB) with an all-trans polyprenyl group. Mediates the second step in the final reaction sequence of ubiquinone-8 (UQ-8) biosynthesis, which is the condensation of the polyisoprenoid side chain with PHB, generating the first membrane-bound Q intermediate 3-octaprenyl-4-hydroxybenzoate. The chain is 4-hydroxybenzoate octaprenyltransferase from Francisella tularensis subsp. novicida (strain U112).